The chain runs to 280 residues: Tryptophan synthase alpha chain (280 aa).

Active-site proton acceptor residues include E49 and D60.

It belongs to the TrpA family. In terms of assembly, tetramer of two alpha and two beta chains.

It carries out the reaction (1S,2R)-1-C-(indol-3-yl)glycerol 3-phosphate + L-serine = D-glyceraldehyde 3-phosphate + L-tryptophan + H2O. The protein operates within amino-acid biosynthesis; L-tryptophan biosynthesis; L-tryptophan from chorismate: step 5/5. In terms of biological role, the alpha subunit is responsible for the aldol cleavage of indoleglycerol phosphate to indole and glyceraldehyde 3-phosphate. The sequence is that of Tryptophan synthase alpha chain from Corynebacterium glutamicum (strain R).